A 291-amino-acid chain; its full sequence is Pantothenate synthetase (291 aa).

M30 to H37 lines the ATP pocket. H37 (proton donor) is an active-site residue. A (R)-pantoate-binding site is contributed by Q61. Residue Q61 participates in beta-alanine binding. ATP is bound at residue G147–D150. Residue Q153 coordinates (R)-pantoate. ATP-binding positions include V176 and L184–R187.

It belongs to the pantothenate synthetase family. As to quaternary structure, homodimer.

Its subcellular location is the cytoplasm. The enzyme catalyses (R)-pantoate + beta-alanine + ATP = (R)-pantothenate + AMP + diphosphate + H(+). It functions in the pathway cofactor biosynthesis; (R)-pantothenate biosynthesis; (R)-pantothenate from (R)-pantoate and beta-alanine: step 1/1. Functionally, catalyzes the condensation of pantoate with beta-alanine in an ATP-dependent reaction via a pantoyl-adenylate intermediate. The chain is Pantothenate synthetase from Koribacter versatilis (strain Ellin345).